The chain runs to 221 residues: ATP-dependent dethiobiotin synthetase BioD (221 aa).

Position 11-16 (11-16 (GVGKTY)) interacts with ATP. A Mg(2+)-binding site is contributed by T15. K36 is a catalytic residue. Residue T40 coordinates substrate. ATP is bound by residues D48 and 107–110 (EGAG). 2 residues coordinate Mg(2+): D48 and E107.

Belongs to the dethiobiotin synthetase family. In terms of assembly, homodimer. It depends on Mg(2+) as a cofactor.

It localises to the cytoplasm. It catalyses the reaction (7R,8S)-7,8-diammoniononanoate + CO2 + ATP = (4R,5S)-dethiobiotin + ADP + phosphate + 3 H(+). The protein operates within cofactor biosynthesis; biotin biosynthesis; biotin from 7,8-diaminononanoate: step 1/2. Its function is as follows. Catalyzes a mechanistically unusual reaction, the ATP-dependent insertion of CO2 between the N7 and N8 nitrogen atoms of 7,8-diaminopelargonic acid (DAPA, also called 7,8-diammoniononanoate) to form a ureido ring. The polypeptide is ATP-dependent dethiobiotin synthetase BioD (Hydrogenobaculum sp. (strain Y04AAS1)).